The primary structure comprises 461 residues: GTPase Der (461 aa).

2 consecutive EngA-type G domains span residues 3-167 (PQVI…GEKQ) and 190-371 (LKLA…AAWS). GTP-binding positions include 9-16 (GRPNVGKS), 56-60 (DTAGW), 119-122 (NKAE), 196-203 (GRPNAGKS), 249-253 (DTAGM), and 314-317 (NKWD). The region spanning 372-456 (KRVPTAALNR…PIRLTLRSPK (85 aa)) is the KH-like domain.

The protein belongs to the TRAFAC class TrmE-Era-EngA-EngB-Septin-like GTPase superfamily. EngA (Der) GTPase family. In terms of assembly, associates with the 50S ribosomal subunit.

In terms of biological role, GTPase that plays an essential role in the late steps of ribosome biogenesis. In Novosphingobium aromaticivorans (strain ATCC 700278 / DSM 12444 / CCUG 56034 / CIP 105152 / NBRC 16084 / F199), this protein is GTPase Der.